Here is a 208-residue protein sequence, read N- to C-terminus: AN1-type zinc finger protein 6 (208 aa).

The A20-type zinc-finger motif lies at 8–42; the sequence is SQVPMLCSTGCGFYGNPRTNGMCSVCYKEHLQRQN. The Zn(2+) site is built by cysteine 14, cysteine 18, cysteine 30, and cysteine 33. The segment covering 41-68 has biased composition (polar residues); sequence QNSSNGRISPPATSVSSLSESLPVQCTD. Residues 41 to 140 are disordered; it reads QNSSNGRISP…PSEEQSKSLE (100 aa). Position 49 is a phosphoserine (serine 49). Residues 75 to 94 are compositionally biased toward low complexity; that stretch reads QSTLDSTSSSMQPSPVSNQS. 2 stretches are compositionally biased toward polar residues: residues 95–110 and 120–133; these read LLSESVASSQLDSTSV and LQASVSDTAQQPSE. The AN1-type zinc-finger motif lies at 143–189; it reads KQKKNRCFMCRKKVGLTGFECRCGNVYCGVHRYSDVHNCSYNYKADA. Residues cysteine 149, cysteine 152, cysteine 163, cysteine 165, cysteine 170, histidine 173, histidine 179, and cysteine 181 each contribute to the Zn(2+) site. Residue lysine 204 is modified to N6-acetyllysine.

As to quaternary structure, interacts with PKN1. Interacts with TRAF2. Interacts with mono- and polyubiquitin. Interacts with PEX6. Interacts with PEX5 (Cys-linked ubiquitinated).

It is found in the cytoplasm. Functionally, involved in regulation of TNF-alpha induced NF-kappa-B activation and apoptosis. Involved in modulation of 'Lys-48'-linked polyubiquitination status of TRAF2 and decreases association of TRAF2 with RIPK1. Required for PTS1 target sequence-dependent protein import into peroxisomes and PEX5 stability; may cooperate with PEX6. In vitro involved in PEX5 export from the cytosol to peroxisomes. The protein is AN1-type zinc finger protein 6 (ZFAND6) of Pongo abelii (Sumatran orangutan).